Reading from the N-terminus, the 859-residue chain is Linoleate 9S-lipoxygenase B (859 aa).

Residues 34–158 enclose the PLAT domain; that stretch reads INIGASVVDG…RYKSDRIFFA (125 aa). Positions 161–859 constitute a Lipoxygenase domain; the sequence is AYLPSETPQP…GKGIPNSVSI (699 aa). The segment at 213–246 is disordered; it reads EYARPILGGSSEYPYPRRGRTGREPTKADPNCES. Over residues 233 to 244 the composition is skewed to basic and acidic residues; that stretch reads TGREPTKADPNC. Residues His-521, His-526, His-711, and Ile-859 each contribute to the Fe cation site.

The protein belongs to the lipoxygenase family. As to quaternary structure, monomer. Requires Fe cation as cofactor. In terms of tissue distribution, fruit specific.

The protein localises to the cytoplasm. The catalysed reaction is (9Z,12Z)-octadecadienoate + O2 = (9S)-hydroperoxy-(10E,12Z)-octadecadienoate. Its pathway is lipid metabolism; oxylipin biosynthesis. Functionally, plant lipoxygenase may be involved in a number of diverse aspects of plant physiology including growth and development, pest resistance, and senescence or responses to wounding. It catalyzes the hydroperoxidation of lipids containing a cis,cis-1,4-pentadiene structure. This Solanum lycopersicum (Tomato) protein is Linoleate 9S-lipoxygenase B (LOX1.2).